The primary structure comprises 125 residues: MAAMTDVTDPSSVAMESATEKIIILPGHSADLTSVTFQIQKEDHTLGNSLRYVIMKNPEVEFCGYSIPHPSEAKMNFRIQTAPSTTAVDVLRKGLDDLIDLCDAVTEKFTEQLPRDTSTTMEVDG.

It belongs to the archaeal Rpo11/eukaryotic RPB11/RPC19 RNA polymerase subunit family. In terms of assembly, component of the RNA polymerase I (Pol I) and RNA polymerase III (Pol III) complexes consisting of 14 and 17 subunits, respectively.

It localises to the nucleus. Its function is as follows. DNA-dependent RNA polymerase catalyzes the transcription of DNA into RNA using the four ribonucleoside triphosphates as substrates. Common core component of RNA polymerases I and III which synthesize ribosomal RNA precursors and small RNAs, such as 5S rRNA and tRNAs, respectively. The chain is DNA-directed RNA polymerases I and III subunit RPAC2 (rpc19) from Schizosaccharomyces pombe (strain 972 / ATCC 24843) (Fission yeast).